The following is a 371-amino-acid chain: GDP-mannose 3,5-epimerase 2 (371 aa).

NAD(+) contacts are provided by residues 29–55, Asp-53, and Asp-73; that span reads GAGGFIASHIARRLKSEGHYIIASDWK. Substrate is bound by residues Gly-98 and 138–140; that span reads SAC. The NAD(+) site is built by Tyr-168 and Lys-172. The active-site Proton acceptor is the Tyr-168. Substrate-binding positions include Asn-197, 210–212, Lys-219, 235–237, Arg-300, and Ser-350; these read EKA and QTR.

Belongs to the NAD(P)-dependent epimerase/dehydratase family. NAD(+) serves as cofactor.

It carries out the reaction GDP-alpha-D-mannose = GDP-beta-L-gulose. It catalyses the reaction GDP-beta-L-gulose = GDP-beta-L-galactose. It functions in the pathway cofactor biosynthesis; L-ascorbate biosynthesis via GDP-alpha-D-mannose pathway; L-ascorbate from GDP-alpha-D-mannose: step 1/5. Functionally, catalyzes a reversible epimerization of GDP-D-mannose that precedes the committed step in the biosynthesis of vitamin C (L-ascorbate), resulting in the hydrolysis of the highly energetic glycosyl-pyrophosphoryl linkage. Able to catalyze 2 distinct epimerization reactions and can release both GDP-L-galactose and GDP-L-gulose from GDP-mannose. The sequence is that of GDP-mannose 3,5-epimerase 2 (GME-2) from Oryza sativa subsp. japonica (Rice).